Reading from the N-terminus, the 304-residue chain is Calcium release-activated calcium channel protein 1 (304 aa).

Pro residues predominate over residues 1 to 11 (MHPEPAPPPSH). The disordered stretch occupies residues 1 to 50 (MHPEPAPPPSHSNPELPVSGGSSTSGSRRSRRRSGDGEPSGAPPLPPPPP). At 1 to 89 (MHPEPAPPPS…KLYLSRAKLK (89 aa)) the chain is on the cytoplasmic side. The required for generation of inwardly rectifying CRAC currents stretch occupies residues 3–49 (PEPAPPPSHSNPELPVSGGSSTSGSRRSRRRSGDGEPSGAPPLPPPP). A compositionally biased stretch (low complexity) spans 12–27 (SNPELPVSGGSSTSGS). The segment at 39-61 (PSGAPPLPPPPPAVSYPDWIGQS) is AKAP5 association region. Pro residues predominate over residues 41–50 (GAPPLPPPPP). The interval 72 to 92 (SMQALSWRKLYLSRAKLKASS) is interaction with STIM1. The helical transmembrane segment at 90–107 (ASSRTSALLSGFAMVAMV) threads the bilayer. The Extracellular segment spans residues 108–121 (EVQLDTDHDYPPGL). Residues 122–142 (LIVFSACTTVLVAVHLFALMI) form a helical membrane-spanning segment. Over 143–175 (STCILPNIEAVSNVHNLNSVKESPHERMHRHIE) the chain is Cytoplasmic. A helical transmembrane segment spans residues 176–196 (LAWAFSTVIGTLLFLAEVVLL). The Extracellular segment spans residues 197–237 (CWVKFLPLKRQAGQPSPTKPPAESVIVANHSDSSGITPGEA). An N-linked (GlcNAc...) asparagine glycan is attached at Asn-225. Residues 238–258 (AAIASTAIMVPCGLVFIVFAV) form a helical membrane-spanning segment. Residues 259–304 (HFYRSLVSHKTDRQFQELNELAEFARLQDQLDHRGDHSLTPGTHYA) are Cytoplasmic-facing. Residues 275–295 (ELNELAEFARLQDQLDHRGDH) form an interaction with STIM1 region. Thr-298 carries the post-translational modification Phosphothreonine.

It belongs to the Orai family. As to quaternary structure, oligomerizes in homomeric and heteromeric ORAI complexes. Native CRAC channels most likely consist of hexameric ORAI heteromers, implying that diverse ORAI1, ORAI2 and ORAI3 subunit combinations with distinct biophysical properties can operate in a cell-type specific way. ARC channels are heteropentamers consisting of three ORAI1 and two ORAI3 subunits. Interacts with STIM1 and STIM2; this regulates channel activity. Interacts with CALM; this may displace STIM1 and STIM2 and might thereby modulate channel activity. Interacts (via N-terminus) with AKAP5 upon store depletion. Interacts with CRACR2A/EFCAB4B; the interaction is direct and takes place in absence of Ca(2+). Forms a complex with CRACR2A/EFCAB4B and STIM1 at low concentration of Ca(2+), the complex dissociates at elevated Ca(2+) concentrations. Interacts with ASPH (isoform 8). Interacts with SLC35G1. Interacts with UBQLN1. Interacts with ADCY8; interaction is calcium store depletion independent; interaction occurs in membrane raft; interaction increases markedly after store depletion; positively regulates SOCE-induced adenylate cyclase activity; contributes to the targeting of ADCY8 to discrete regions of the plasma membrane that are shielded from other calcium events. Interacts with EFHB; the interaction takes place upon Ca(2+)-store depletion. Interacts (via N- and C-termini) with ATP2C2 (via N-terminus); this interaction regulates Ca(2+) influx at the plasma membrane. Interacts with TSPAN18; this interaction regulates ORAI1 exit from the endoplasmic (ER), and/or Golgi, and trafficking to the cell surface. In terms of processing, N-glycosylated. N-glycosylation inhibits channel activity in T cells. Ubiquitinated. Post-translationally, cys-195 is oxidated, leading to inactivation of channel activity. Expressed in lactating mammary epithelium (at protein level).

The protein resides in the cell membrane. The protein localises to the basolateral cell membrane. The catalysed reaction is Ca(2+)(in) = Ca(2+)(out). Oxidation at Cys-197 leads to inactivation of channel activity. Pore-forming subunit of two major inward rectifying Ca(2+) channels at the plasma membrane: Ca(2+) release-activated Ca(2+) (CRAC) channels and arachidonate-regulated Ca(2+)-selective (ARC) channels. Assembles with ORAI2 and ORAI3 to form hexameric CRAC channels that mediate Ca(2+) influx upon depletion of endoplasmic reticulum Ca(2+) store and channel activation by Ca(2+) sensor STIM1, a process known as store-operated Ca(2+) entry (SOCE). Various pore subunit combinations may account for distinct CRAC channel spatiotemporal and cell-type specific dynamics. ORAI1 mainly contributes to the generation of Ca(2+) plateaus involved in sustained Ca(2+) entry and is dispensable for cytosolic Ca(2+) oscillations, whereas ORAI2 and ORAI3 generate oscillatory patterns. CRAC channels assemble in Ca(2+) signaling microdomains where Ca(2+) influx is coupled to calmodulin and calcineurin signaling and activation of NFAT transcription factors recruited to ORAI1 via AKAP5. Activates NFATC2/NFAT1 and NFATC3/NFAT4-mediated transcriptional responses. CRAC channels are the main pathway for Ca(2+) influx in T cells and promote the immune response to pathogens by activating NFAT-dependent cytokine and chemokine transcription. Assembles with ORAI3 to form channels that mediate store-independent Ca(2+) influx in response to inflammatory metabolites arachidonate or its derivative leukotriene C4, termed ARC and LRC channels respectively. Plays a prominent role in Ca(2+) influx at the basolateral membrane of mammary epithelial cells independently of the Ca(2+) content of endoplasmic reticulum or Golgi stores. May mediate transepithelial transport of large quantities of Ca(2+) for milk secretion. This Mus musculus (Mouse) protein is Calcium release-activated calcium channel protein 1 (Orai1).